The following is a 601-amino-acid chain: ATP-dependent lipid A-core flippase (601 aa).

The next 4 membrane-spanning stretches (helical) occupy residues 27–47 (IGLFLISIVGFLIFASTQPML), 83–103 (LLIVLIAAWQGLGSYLGNYFL), 174–194 (LLWMNWRLTLVMIAILPLIAV), and 267–287 (PLLQLVIYSAMAVLMFLVLYL). An ABC transmembrane type-1 domain is found at 31 to 322 (LISIVGFLIF…LSEVSSTIQK (292 aa)). An ABC transporter domain is found at 354 to 590 (LEVRNLSFTY…NGYYSRLHAM (237 aa)). ATP is bound at residue 388-395 (GRSGSGKS).

The protein belongs to the ABC transporter superfamily. Lipid exporter (TC 3.A.1.106) family. Homodimer.

It is found in the cell inner membrane. The catalysed reaction is ATP + H2O + lipid A-core oligosaccharideSide 1 = ADP + phosphate + lipid A-core oligosaccharideSide 2.. In terms of biological role, involved in lipopolysaccharide (LPS) biosynthesis. Translocates lipid A-core from the inner to the outer leaflet of the inner membrane. Transmembrane domains (TMD) form a pore in the inner membrane and the ATP-binding domain (NBD) is responsible for energy generation. The chain is ATP-dependent lipid A-core flippase from Pseudomonas fluorescens (strain ATCC BAA-477 / NRRL B-23932 / Pf-5).